The following is a 406-amino-acid chain: 2,3-bisphosphoglycerate-independent phosphoglycerate mutase (406 aa).

The tract at residues 164–184 (VSSNDPKKTGVQPKTIHPDDD) is disordered.

The protein belongs to the BPG-independent phosphoglycerate mutase family. A-PGAM subfamily.

The catalysed reaction is (2R)-2-phosphoglycerate = (2R)-3-phosphoglycerate. Its pathway is carbohydrate degradation; glycolysis; pyruvate from D-glyceraldehyde 3-phosphate: step 3/5. In terms of biological role, catalyzes the interconversion of 2-phosphoglycerate and 3-phosphoglycerate. The protein is 2,3-bisphosphoglycerate-independent phosphoglycerate mutase of Methanocorpusculum labreanum (strain ATCC 43576 / DSM 4855 / Z).